A 364-amino-acid polypeptide reads, in one-letter code: O-methyltransferase ZRP4 (364 aa).

The S-adenosyl-L-methionine site is built by G208, D231, D251, M252, and K265. The active-site Proton acceptor is the H269.

It belongs to the class I-like SAM-binding methyltransferase superfamily. Cation-independent O-methyltransferase family. COMT subfamily. In terms of assembly, homodimer. In terms of tissue distribution, accumulates preferentially in the roots and is located predominantly in the region of the endodermis, low levels are seen in the leaves, stems and other shoot organs.

May be involved in the O-methylation of suberin phenylpropanoid precursors. This chain is O-methyltransferase ZRP4 (ZRP4), found in Zea mays (Maize).